The following is a 33-amino-acid chain: Photosystem II reaction center protein Psb30 (33 aa).

The helical transmembrane segment at 5-25 threads the bilayer; the sequence is ILAQLTALAFIVVSGPLVIAL.

This sequence belongs to the Psb30/Ycf12 family. As to quaternary structure, PSII is composed of 1 copy each of membrane proteins PsbA, PsbB, PsbC, PsbD, PsbE, PsbF, PsbH, PsbI, PsbJ, PsbK, PsbL, PsbM, PsbT, PsbX, PsbY, PsbZ, Psb30/Ycf12, peripheral proteins of the oxygen-evolving complex and a large number of cofactors. It forms dimeric complexes.

The protein localises to the plastid. Its subcellular location is the chloroplast thylakoid membrane. Its function is as follows. A core subunit of photosystem II (PSII), probably helps stabilize the reaction center. This chain is Photosystem II reaction center protein Psb30, found in Chaetosphaeridium globosum (Charophycean green alga).